The sequence spans 131 residues: D-ribose pyranase (131 aa).

H20 functions as the Proton donor in the catalytic mechanism. Residues D28, H98, and 120 to 122 (YAN) each bind substrate.

The protein belongs to the RbsD / FucU family. RbsD subfamily. In terms of assembly, homodecamer.

It is found in the cytoplasm. The enzyme catalyses beta-D-ribopyranose = beta-D-ribofuranose. It functions in the pathway carbohydrate metabolism; D-ribose degradation; D-ribose 5-phosphate from beta-D-ribopyranose: step 1/2. Catalyzes the interconversion of beta-pyran and beta-furan forms of D-ribose. The sequence is that of D-ribose pyranase from Bacillus cereus (strain G9842).